A 382-amino-acid polypeptide reads, in one-letter code: Mannitol-1-phosphate 5-dehydrogenase (382 aa).

Residue 3–14 (ALHFGAGNIGRG) coordinates NAD(+).

It belongs to the mannitol dehydrogenase family.

The enzyme catalyses D-mannitol 1-phosphate + NAD(+) = beta-D-fructose 6-phosphate + NADH + H(+). This is Mannitol-1-phosphate 5-dehydrogenase from Salmonella enteritidis PT4 (strain P125109).